Here is a 298-residue protein sequence, read N- to C-terminus: Nucleoid occlusion protein (298 aa).

Residues 152–171 (EALAQRLGKGQSTVANKLRL) constitute a DNA-binding region (H-T-H motif).

This sequence belongs to the ParB family.

It is found in the cytoplasm. The protein localises to the nucleoid. Effects nucleoid occlusion by binding relatively nonspecifically to DNA and preventing the assembly of the division machinery in the vicinity of the nucleoid, especially under conditions that disturb the cell cycle. It helps to coordinate cell division and chromosome segregation by preventing the formation of the Z ring through the nucleoid, which would cause chromosome breakage. This is Nucleoid occlusion protein from Lysinibacillus sphaericus (strain C3-41).